Here is a 785-residue protein sequence, read N- to C-terminus: Ribosome biogenesis protein BOP1 homolog (785 aa).

A compositionally biased stretch (basic residues) spans 1–11; that stretch reads MTKKLTIKRKV. Residues 1–160 are disordered; the sequence is MTKKLTIKRK…DSDTSDEEDI (160 aa). 3 stretches are compositionally biased toward acidic residues: residues 45–54, 61–73, and 85–102; these read EDSTDDEGID, SSED…DEEG, and SGDD…EDDA. Basic and acidic residues predominate over residues 103 to 112; the sequence is DAKKSSKNND. Residues 150–159 are compositionally biased toward acidic residues; it reads ADSDTSDEED. 7 WD repeats span residues 446 to 487, 489 to 527, 571 to 613, 616 to 654, 657 to 696, 700 to 739, and 755 to 785; these read GHTD…RTIE, EDVV…KLLV, THFK…SQIP, KSKG…LIKK, TNSK…KPYQ, LHRN…DLLQ, and REEF…RLFT.

Belongs to the WD repeat BOP1/ERB1 family.

It is found in the nucleus. Its subcellular location is the nucleolus. The protein resides in the nucleoplasm. Required for maturation of ribosomal RNAs and formation of the large ribosomal subunit. This is Ribosome biogenesis protein BOP1 homolog from Drosophila persimilis (Fruit fly).